Here is a 472-residue protein sequence, read N- to C-terminus: Doublesex- and mab-3-related transcription factor 3 (472 aa).

The segment at residues 29 to 76 (CARCRNHGVLSWLKGHKRYCRFKDCTCEKCILIIERQRVMAAQVALRR) is a DNA-binding region (DM). Disordered regions lie at residues 89–128 (DSLRALPGPPPPGDAVAAPQPPPASQPSQPQPPRPAAELA) and 155–191 (EERLGDGKSADNTEVFSDKDTDQRSSPDVAKSKGCFT). The segment covering 95-123 (PGPPPPGDAVAAPQPPPASQPSQPQPPRP) has biased composition (pro residues). Positions 155–179 (EERLGDGKSADNTEVFSDKDTDQRS) are enriched in basic and acidic residues. Residues 249 to 284 (RPPLEVLKKIFPNQKPTVLELILKGCGGDLVSAVEV) enclose the DMA domain. The interval 430-472 (TEDPRISIPDDGCPFVSKQSIYTEDDYDERSDSSDSRTLNTSS) is disordered.

It belongs to the DMRT family. May homodimerize. In terms of tissue distribution, expressed in testis.

The protein resides in the nucleus. Probable transcription factor that plays a role in configuring the spinal circuits controlling stride in vertebrates. Involved in neuronal specification within specific subdivision of spinal cord neurons and in the development of a coordinated locomotor network controlling limb movements. May regulate transcription during sexual development. This Homo sapiens (Human) protein is Doublesex- and mab-3-related transcription factor 3 (DMRT3).